Here is a 760-residue protein sequence, read N- to C-terminus: Armadillo-like helical domain-containing protein 4 (760 aa).

Positions 1-27 (MSRPIVLHICLAFCSLLLLNFAAQCLA) are cleaved as a signal peptide. The Extracellular segment spans residues 28–700 (FPNLERREIV…KDKAGYMSGM (673 aa)). Disordered stretches follow at residues 49-69 (LNTDDLENDSVTSNTPVSGDP), 117-143 (GEEVFGSSQPERMSPESRPSKATLTNP), 216-243 (RTEKFEANPEHKTTSFPGSKLTAGTEPS), 373-392 (HGGERASDQSSVTPTSPMGD), 474-495 (TRGEDETKGGRELPSATVDAPR), and 536-652 (NEEL…SQEP). Asn-56 carries an N-linked (GlcNAc...) asparagine glycan. The segment covering 216–228 (RTEKFEANPEHKT) has biased composition (basic and acidic residues). The segment covering 380-390 (DQSSVTPTSPM) has biased composition (polar residues). The span at 474 to 484 (TRGEDETKGGR) shows a compositional bias: basic and acidic residues. The segment covering 594–635 (LESEEGEDDEDEEDEEEEDEEEEDEEEDEEDKDADSLDEALG) has biased composition (acidic residues). The helical transmembrane segment at 701 to 721 (LVPVGVGIAGALFILGALYSI) threads the bilayer. At 722–760 (KVMNRRRRNGFKRHKRKQREFNSMQDRVMLLADSSEDEF) the chain is on the cytoplasmic side. Phosphoserine is present on residues Ser-755 and Ser-756.

Interacts with IL6ST; this interaction prevents IL6ST protein homodimerization and bridges ARMH4 with IL6R and STAT3 and therefore inhibits phosphorylation of STAT3 at 'Tyr-705'. Interacts (via cytoplasmic tail) with RICTOR; this interaction bridges ARMH4 to the mTORC2 complex and inhibits the mTORC2 kinase activity.

The protein resides in the membrane. Its function is as follows. May modulate immune response and may play a role in inflammation. Down-modulates STAT3 signaling throught direct interaction with IL6ST, resulting in the inhibition of phosphorylation of STAT3 at Tyr-705. May negatively regulates AKT signaling by modulating the activity of mTORC2 complex through RICTOR interaction. The polypeptide is Armadillo-like helical domain-containing protein 4 (Bos taurus (Bovine)).